The chain runs to 408 residues: Putative transporter AmpG 2 (408 aa).

11 helical membrane passes run 11-31 (IFNI…YLLT), 49-69 (IGLF…GPLL), 84-104 (YCLV…TSFN), 110-130 (IPFV…DMLI), 154-174 (FRIG…IISW), 177-197 (VYRT…FYPL), 224-244 (CIVI…LSIM), 261-281 (VGYK…GGFL), 294-311 (VLIY…LYFL), 353-373 (IALI…ISGY), and 382-402 (YFFI…LYLP).

It belongs to the major facilitator superfamily.

The protein localises to the cell inner membrane. The chain is Putative transporter AmpG 2 (ampG2) from Rickettsia prowazekii (strain Madrid E).